We begin with the raw amino-acid sequence, 209 residues long: UPF0174 protein jhp_1493 (209 aa).

This sequence belongs to the UPF0174 family.

This is UPF0174 protein jhp_1493 from Helicobacter pylori (strain J99 / ATCC 700824) (Campylobacter pylori J99).